The chain runs to 307 residues: Nucleotide-binding protein Arth_2083 (307 aa).

30-37 is a binding site for ATP; it reads GMSGAGRS. Residue 81-84 coordinates GTP; that stretch reads DVRS.

This sequence belongs to the RapZ-like family.

Its function is as follows. Displays ATPase and GTPase activities. The polypeptide is Nucleotide-binding protein Arth_2083 (Arthrobacter sp. (strain FB24)).